Here is a 356-residue protein sequence, read N- to C-terminus: MDYTLDPSMTTMTDYYYPDSLSSPCDGELIQRNDKLLLAVFYCLLFVFSLLGNSLVILVLVVCKKLRNITDIYLLNLALSDLLFVFSFPFQTYYQLDQWVFGTVMCKVVSGFYYIGFYSSMFFITLMSVDRYLAVVHAVYAIKVRTIRMGTTTLSLLVWLTAIMATIPLLVFYQVASEDGVLQCYSFYNQQTLKWKIFTNFEMNILGLLIPFTIFMFCYIKILHQLKRCQNHNKTKAIRLVLIVVIASLLFWVPFNVVLFLTSLHSMHILDGCSISQQLNYATHVTEIISFTHCCVNPVIYAFVGEKFKKHLSEIFQKSCSHIFIYLGRQMPRESCEKSSSCQQHSFRSSSIDYIL.

The Extracellular portion of the chain corresponds to 1–35 (MDYTLDPSMTTMTDYYYPDSLSSPCDGELIQRNDK). A helical membrane pass occupies residues 36-63 (LLLAVFYCLLFVFSLLGNSLVILVLVVC). The Cytoplasmic segment spans residues 64-73 (KKLRNITDIY). The helical transmembrane segment at 74–93 (LLNLALSDLLFVFSFPFQTY) threads the bilayer. The Extracellular portion of the chain corresponds to 94–107 (YQLDQWVFGTVMCK). Cys-106 and Cys-184 are oxidised to a cystine. Residues 108-129 (VVSGFYYIGFYSSMFFITLMSV) traverse the membrane as a helical segment. Topologically, residues 130-146 (DRYLAVVHAVYAIKVRT) are cytoplasmic. Residues 147-172 (IRMGTTTLSLLVWLTAIMATIPLLVF) traverse the membrane as a helical segment. Over 173 to 203 (YQVASEDGVLQCYSFYNQQTLKWKIFTNFEM) the chain is Extracellular. Residues 204 to 223 (NILGLLIPFTIFMFCYIKIL) form a helical membrane-spanning segment. At 224-239 (HQLKRCQNHNKTKAIR) the chain is on the cytoplasmic side. A helical membrane pass occupies residues 240–264 (LVLIVVIASLLFWVPFNVVLFLTSL). Residues 265 to 281 (HSMHILDGCSISQQLNY) are Extracellular-facing. A helical membrane pass occupies residues 282-305 (ATHVTEIISFTHCCVNPVIYAFVG). The Cytoplasmic portion of the chain corresponds to 306 to 356 (EKFKKHLSEIFQKSCSHIFIYLGRQMPRESCEKSSSCQQHSFRSSSIDYIL).

The protein belongs to the G-protein coupled receptor 1 family.

It localises to the cell membrane. Functionally, receptor for the chemokines CCL1/SCYA1/I-309. May regulate monocyte chemotaxis and thymic cell line apoptosis. The sequence is that of C-C chemokine receptor type 8 (CCR8) from Macaca mulatta (Rhesus macaque).